The sequence spans 327 residues: Methionyl-tRNA formyltransferase (327 aa).

118 to 121 (SLLP) provides a ligand contact to (6S)-5,6,7,8-tetrahydrofolate.

It belongs to the Fmt family.

It catalyses the reaction L-methionyl-tRNA(fMet) + (6R)-10-formyltetrahydrofolate = N-formyl-L-methionyl-tRNA(fMet) + (6S)-5,6,7,8-tetrahydrofolate + H(+). Its function is as follows. Attaches a formyl group to the free amino group of methionyl-tRNA(fMet). The formyl group appears to play a dual role in the initiator identity of N-formylmethionyl-tRNA by promoting its recognition by IF2 and preventing the misappropriation of this tRNA by the elongation apparatus. This is Methionyl-tRNA formyltransferase from Corynebacterium jeikeium (strain K411).